Reading from the N-terminus, the 357-residue chain is Neutral protease 2 homolog UREG_02006 (357 aa).

The signal sequence occupies residues 1–19 (MLFSSRFLALAALLGQALA). Positions 20–179 (LPIDDFSQSD…QSAVPTIEKR (160 aa)) are excised as a propeptide. Cystine bridges form between cysteine 187/cysteine 259 and cysteine 266/cysteine 284. Histidine 308 lines the Zn(2+) pocket. The active site involves glutamate 309. Zn(2+)-binding residues include histidine 312 and aspartate 323.

It belongs to the peptidase M35 family. It depends on Zn(2+) as a cofactor.

The protein localises to the secreted. It carries out the reaction Preferential cleavage of bonds with hydrophobic residues in P1'. Also 3-Asn-|-Gln-4 and 8-Gly-|-Ser-9 bonds in insulin B chain.. Secreted metalloproteinase that allows assimilation of proteinaceous substrates. Shows high activities on basic nuclear substrates such as histone and protamine. In Uncinocarpus reesii (strain UAMH 1704), this protein is Neutral protease 2 homolog UREG_02006.